The sequence spans 357 residues: MSGTVLIMAGGTGGHVFPALAVADQLRTRGFDILWLGAENGMEGNLVRQYGYEIAELSVSRLRGGGIKRKLTAPFNLLRAVLQARQLIRARQPVLAVGFGGFASGPGGLAARLCKVPVVVHEQNAVPGLTNRLLSRLSTVTLEGFQGAFGHPQACWVGNPVRPQITALEEPARRYAQHQGGLRVLVLGGSQGALVLNQDLPELLLAVLGRDIQVRHQCGAGRTAEAAPIYQALGLQAQVSEFIDDMAEAYGWADLVICRAGALTVAEVAAAGVAALFVPLPSAVDDHQTLNARWLSERGAALLLPQRDLGAVSLAGTLKPVAERGLLAQIAERAREQAMADSAERAATLCEEVANGR.

UDP-N-acetyl-alpha-D-glucosamine contacts are provided by residues 12–14 (TGG), Asn-124, Arg-162, Ser-190, Ile-243, 262–267 (ALTVAE), and Gln-288.

Belongs to the glycosyltransferase 28 family. MurG subfamily.

It is found in the cell inner membrane. The catalysed reaction is di-trans,octa-cis-undecaprenyl diphospho-N-acetyl-alpha-D-muramoyl-L-alanyl-D-glutamyl-meso-2,6-diaminopimeloyl-D-alanyl-D-alanine + UDP-N-acetyl-alpha-D-glucosamine = di-trans,octa-cis-undecaprenyl diphospho-[N-acetyl-alpha-D-glucosaminyl-(1-&gt;4)]-N-acetyl-alpha-D-muramoyl-L-alanyl-D-glutamyl-meso-2,6-diaminopimeloyl-D-alanyl-D-alanine + UDP + H(+). Its pathway is cell wall biogenesis; peptidoglycan biosynthesis. In terms of biological role, cell wall formation. Catalyzes the transfer of a GlcNAc subunit on undecaprenyl-pyrophosphoryl-MurNAc-pentapeptide (lipid intermediate I) to form undecaprenyl-pyrophosphoryl-MurNAc-(pentapeptide)GlcNAc (lipid intermediate II). The protein is UDP-N-acetylglucosamine--N-acetylmuramyl-(pentapeptide) pyrophosphoryl-undecaprenol N-acetylglucosamine transferase of Alcanivorax borkumensis (strain ATCC 700651 / DSM 11573 / NCIMB 13689 / SK2).